We begin with the raw amino-acid sequence, 266 residues long: Putative carbamate hydrolase RutD (266 aa).

Belongs to the AB hydrolase superfamily. Hydrolase RutD family.

The enzyme catalyses carbamate + 2 H(+) = NH4(+) + CO2. Involved in pyrimidine catabolism. May facilitate the hydrolysis of carbamate, a reaction that can also occur spontaneously. This chain is Putative carbamate hydrolase RutD, found in Escherichia coli O103:H2 (strain 12009 / EHEC).